The sequence spans 271 residues: Formamidopyrimidine-DNA glycosylase (271 aa).

The active-site Schiff-base intermediate with DNA is the Pro-2. Residue Glu-3 is the Proton donor of the active site. Lys-58 serves as the catalytic Proton donor; for beta-elimination activity. DNA-binding residues include His-92, Arg-111, and Lys-152. The FPG-type zinc finger occupies 237 to 271 (YVYGKVQKPCKICNNIITLIRQNGRSTYFCNACQN). Catalysis depends on Arg-261, which acts as the Proton donor; for delta-elimination activity.

Belongs to the FPG family. As to quaternary structure, monomer. Zn(2+) serves as cofactor.

It catalyses the reaction Hydrolysis of DNA containing ring-opened 7-methylguanine residues, releasing 2,6-diamino-4-hydroxy-5-(N-methyl)formamidopyrimidine.. It carries out the reaction 2'-deoxyribonucleotide-(2'-deoxyribose 5'-phosphate)-2'-deoxyribonucleotide-DNA = a 3'-end 2'-deoxyribonucleotide-(2,3-dehydro-2,3-deoxyribose 5'-phosphate)-DNA + a 5'-end 5'-phospho-2'-deoxyribonucleoside-DNA + H(+). Its function is as follows. Involved in base excision repair of DNA damaged by oxidation or by mutagenic agents. Acts as a DNA glycosylase that recognizes and removes damaged bases. Has a preference for oxidized purines, such as 7,8-dihydro-8-oxoguanine (8-oxoG). Has AP (apurinic/apyrimidinic) lyase activity and introduces nicks in the DNA strand. Cleaves the DNA backbone by beta-delta elimination to generate a single-strand break at the site of the removed base with both 3'- and 5'-phosphates. This is Formamidopyrimidine-DNA glycosylase from Wolbachia pipientis wMel.